The chain runs to 314 residues: Aspartate carbamoyltransferase catalytic subunit (314 aa).

Carbamoyl phosphate-binding residues include R55 and T56. K83 contacts L-aspartate. 3 residues coordinate carbamoyl phosphate: R105, H134, and Q137. R167 and R221 together coordinate L-aspartate. Residues G262 and P263 each contribute to the carbamoyl phosphate site.

Belongs to the aspartate/ornithine carbamoyltransferase superfamily. ATCase family. As to quaternary structure, heterododecamer (2C3:3R2) of six catalytic PyrB chains organized as two trimers (C3), and six regulatory PyrI chains organized as three dimers (R2).

The enzyme catalyses carbamoyl phosphate + L-aspartate = N-carbamoyl-L-aspartate + phosphate + H(+). Its pathway is pyrimidine metabolism; UMP biosynthesis via de novo pathway; (S)-dihydroorotate from bicarbonate: step 2/3. Catalyzes the condensation of carbamoyl phosphate and aspartate to form carbamoyl aspartate and inorganic phosphate, the committed step in the de novo pyrimidine nucleotide biosynthesis pathway. This is Aspartate carbamoyltransferase catalytic subunit from Corynebacterium urealyticum (strain ATCC 43042 / DSM 7109).